A 348-amino-acid polypeptide reads, in one-letter code: Ribonuclease H (348 aa).

The segment covering asparagine 54–alanine 65 has biased composition (polar residues). A disordered region spans residues asparagine 54–arginine 81. The 163-residue stretch at tyrosine 184–serine 346 folds into the RNase H type-1 domain. Mg(2+) contacts are provided by aspartate 193, glutamate 235, aspartate 264, and aspartate 338.

Belongs to the RNase H family. Mg(2+) is required as a cofactor.

It carries out the reaction Endonucleolytic cleavage to 5'-phosphomonoester.. Its function is as follows. Endonuclease that specifically degrades the RNA of RNA-DNA hybrids. This chain is Ribonuclease H (RNH1), found in Saccharomyces cerevisiae (strain ATCC 204508 / S288c) (Baker's yeast).